The chain runs to 156 residues: MKCPKCNSTQSKVVDSRHADELNAIRRRRECENCGTRFTTFEHIEVSQLIVVKKDGTREQFSREKILNGLVRSCEKRPVRYQQLEDITNKVEWQLRDEGHTEVSSRDIGEHVMNLLMHVDQVSYVRFASVYKEFKDVDQLLASMQGILSENKRSDA.

A zinc finger spans residues 3 to 34 (CPKCNSTQSKVVDSRHADELNAIRRRRECENC). Residues 49–139 (LIVVKKDGTR…VYKEFKDVDQ (91 aa)) form the ATP-cone domain.

It belongs to the NrdR family. Zn(2+) serves as cofactor.

Its function is as follows. Negatively regulates transcription of bacterial ribonucleotide reductase nrd genes and operons by binding to NrdR-boxes. The sequence is that of Transcriptional repressor NrdR from Staphylococcus aureus (strain NCTC 8325 / PS 47).